Reading from the N-terminus, the 242-residue chain is Phosphatidylethanolamine-binding protein 4 (242 aa).

The first 26 residues, 1–26, serve as a signal peptide directing secretion; the sequence is MTMKLVAAALCLSLLAAGLWVGLSLT. The disordered stretch occupies residues 31 to 50; sequence EEGKPGGEKPGGGKPGGSGR. The span at 38–50 shows a compositional bias: gly residues; sequence EKPGGGKPGGSGR. N-linked (GlcNAc...) asparagine glycans are attached at residues asparagine 77 and asparagine 139. Residues 210–242 are important for secretion; the sequence is DPDTSTQFMTQFDEELSSEFGRINDDQEQFNQK.

This sequence belongs to the phosphatidylethanolamine-binding protein family.

Its subcellular location is the secreted. In terms of biological role, promotes AKT phosphorylation, suggesting a possible role in the PI3K-AKT signaling pathway. This is Phosphatidylethanolamine-binding protein 4 (Pebp4) from Mus musculus (Mouse).